The sequence spans 372 residues: Neuropeptide S receptor (372 aa).

The Extracellular segment spans residues 1–52 (MPANLTEGSFHANQTVPMLDSSPVACTEIVTFTEALEAEEWGSFYSSFKTEQ). N-linked (GlcNAc...) asparagine glycans are attached at residues asparagine 4 and asparagine 13. Residues 53–73 (LITLWVLFVFTIVGNSVVLFS) form a helical membrane-spanning segment. Residues 74-82 (TWRRKRKSR) are Cytoplasmic-facing. A helical transmembrane segment spans residues 83–103 (MTFFVTQLAITDSFTGLINIL). Residues 104–122 (TDIIWRFTGDFMAPDLVCR) are Extracellular-facing. Residues cysteine 121 and cysteine 198 are joined by a disulfide bond. A helical transmembrane segment spans residues 123–143 (IVRYLQVVLLYASTYVLVSLS). At 144–165 (IDRYHAIVYPMKFLQGAEKQAK) the chain is on the cytoplasmic side. A helical membrane pass occupies residues 166 to 186 (VLIGIAWSLSFLFSIPTLIIF). Residues 187–213 (GKRTLSNGEVQCWALWPDDSYWTPYMT) lie on the Extracellular side of the membrane. Residues 214–234 (IVAFLVYFIPLTIISVIYGLV) traverse the membrane as a helical segment. The Cytoplasmic segment spans residues 235–276 (IRTIWIKSKAHETVISNCSDGELCCSYNRGLISKAKIKAIKY). A helical membrane pass occupies residues 277–297 (SIVIILAFICCWSPYFLFDML). At 298–313 (DNFNLLPDTKERFYAS) the chain is on the extracellular side. A helical transmembrane segment spans residues 314–334 (VIIQNLPALNSAINPLIYCIF). Residues 335 to 372 (SGSLCSPCKVQRSQDSRMTYRERSERHEMQILSKPEFI) lie on the Cytoplasmic side of the membrane.

It belongs to the G-protein coupled receptor 1 family. Vasopressin/oxytocin receptor subfamily.

The protein resides in the cell membrane. In terms of biological role, G-protein coupled receptor for neuropeptide S (NPS). Promotes mobilization of intracellular Ca(2+) stores. Inhibits cell growth in response to NPS binding. Involved in pathogenesis of asthma and other IgE-mediated diseases. This Rattus norvegicus (Rat) protein is Neuropeptide S receptor (Npsr1).